The primary structure comprises 285 residues: (3S)-malyl-CoA thioesterase (285 aa).

Residues Arg-70 and Glu-122 each contribute to the substrate site. Mg(2+) contacts are provided by Glu-122 and Asp-148.

Belongs to the HpcH/HpaI aldolase family. As to quaternary structure, homodimer or homotrimer. Mg(2+) serves as cofactor.

The catalysed reaction is (S)-malyl-CoA + H2O = (S)-malate + CoA + H(+). Its function is as follows. Catalyzes the hydrolysis of (3S)-malyl-CoA to (3S)-malate and free CoA. Inactive towards beta-methylmalyl-CoA and other CoA esters. In Cereibacter sphaeroides (strain KD131 / KCTC 12085) (Rhodobacter sphaeroides), this protein is (3S)-malyl-CoA thioesterase.